A 296-amino-acid chain; its full sequence is MASLKELRGRITGVKSTRKITNAMKMVAASKLRRAQMQAEAARPYADAMRRMMAELAMATRGEDAASLPRLLAGTGKDQTHLVVVLTSDRGLAGGFNANIVRSARQLVDTLVSEGKTVRILPVGRKGADILVRHYPEMITDRLAGSDGKDVGFDKATDIGSRIATMLDAGEIDRCTLVYNRFLNAMTQIPVQAPLVPLSVPENDNAAPDADTAQYEFEPDEATLLTQLLPRNLQVQIFSAMLESAAGEQGARMTAMDNASRNASKAIDRLSQKYNRTRQANITNDLIEIISGAEAV.

It belongs to the ATPase gamma chain family. F-type ATPases have 2 components, CF(1) - the catalytic core - and CF(0) - the membrane proton channel. CF(1) has five subunits: alpha(3), beta(3), gamma(1), delta(1), epsilon(1). CF(0) has three main subunits: a, b and c.

Its subcellular location is the cell inner membrane. Produces ATP from ADP in the presence of a proton gradient across the membrane. The gamma chain is believed to be important in regulating ATPase activity and the flow of protons through the CF(0) complex. This Gluconobacter oxydans (strain 621H) (Gluconobacter suboxydans) protein is ATP synthase gamma chain.